We begin with the raw amino-acid sequence, 136 residues long: Large ribosomal subunit protein bL20c (136 aa).

It belongs to the bacterial ribosomal protein bL20 family.

Its subcellular location is the plastid. It is found in the chloroplast. Functionally, binds directly to 23S ribosomal RNA and is necessary for the in vitro assembly process of the 50S ribosomal subunit. It is not involved in the protein synthesizing functions of that subunit. In Huperzia lucidula (Shining clubmoss), this protein is Large ribosomal subunit protein bL20c.